The primary structure comprises 938 residues: RIPOR family member 3 (938 aa).

Phosphoserine is present on residues Ser-9, Ser-24, and Ser-340. Thr-345 bears the Phosphothreonine mark. A phosphoserine mark is found at Ser-351 and Ser-384. Disordered stretches follow at residues 402-430 (EMDSFSSEDPRDTETSTSASTSDVGFLPV) and 579-603 (FGGSQAPERDSPPPPRPSLKVSPSE).

Belongs to the RIPOR family.

The chain is RIPOR family member 3 from Mus musculus (Mouse).